Reading from the N-terminus, the 976-residue chain is Poly(ADP-ribose) glycohydrolase (976 aa).

The residue at position 1 (Met1) is an N-acetylmethionine. A disordered region spans residues 1 to 69; that stretch reads MNAGPGCEPC…GRAGQHRGSA (69 aa). Residues 1-456 are A-domain; it reads MNAGPGCEPC…LSPDKKWLGT (456 aa). The short motif at 10 to 16 is the Nuclear localization signal element; sequence CTKRPRW. Ser22 carries the phosphoserine modification. Over residues 37-46 the composition is skewed to basic and acidic residues; sequence RVLDPKDAHV. The residue at position 68 (Ser68) is a Phosphoserine. The PIP-box (PCNA interacting peptide) signature appears at 76 to 83; the sequence is QKTITSWM. Phosphoserine occurs at positions 133 and 137. Phosphothreonine is present on Thr139. Positions 183-350 are disordered; sequence SNANIDRSPQ…PSRFQARDAD (168 aa). Basic and acidic residues-rich tracts occupy residues 191–206 and 222–233; these read PQND…ENRD and TTEDEQAREAKS. The residue at position 197 (Ser197) is a Phosphoserine. Phosphothreonine is present on Thr199. Ser261, Ser264, Ser286, Ser291, Ser298, Ser302, and Ser316 each carry phosphoserine. Over residues 316 to 331 the composition is skewed to acidic residues; the sequence is SEADEETSPGFDEQED. Residues 332–342 are compositionally biased toward polar residues; sequence GSSSQTANKPS. At Lys340 the chain carries N6-acetyllysine. Residue Ser448 is modified to Phosphoserine. A catalytic region spans residues 610–795; sequence QPIPLLKQKM…TEQYSEYTGY (186 aa). Position 726-727 (726-727) interacts with substrate; that stretch reads IE. Residue Asp737 is part of the active site. Residues Asn740 and Gln754 each contribute to the substrate site. Active-site residues include Glu755 and Glu756. Substrate is bound by residues Tyr795 and 869–874; that span reads NWGCGA.

It belongs to the poly(ADP-ribose) glycohydrolase family. Interacts with PCNA. Interacts with NUDT5. In terms of tissue distribution, ubiquitously expressed.

It localises to the nucleus. The protein resides in the cytoplasm. It is found in the mitochondrion. The protein localises to the mitochondrion matrix. The enzyme catalyses [(1''-&gt;2')-ADP-alpha-D-ribose](n) + H2O = [(1''-&gt;2')-ADP-alpha-D-ribose](n-1) + ADP-D-ribose. Poly(ADP-ribose) glycohydrolase that degrades poly(ADP-ribose) by hydrolyzing the ribose-ribose bonds present in poly(ADP-ribose). PARG acts both as an endo- and exoglycosidase, releasing poly(ADP-ribose) of different length as well as ADP-ribose monomers. It is however unable to cleave the ester bond between the terminal ADP-ribose and ADP-ribosylated residues, leaving proteins that are mono-ADP-ribosylated. Poly(ADP-ribose) is synthesized after DNA damage is only present transiently and is rapidly degraded by PARG. Required to prevent detrimental accumulation of poly(ADP-ribose) upon prolonged replicative stress, while it is not required for recovery from transient replicative stress. Responsible for the prevalence of mono-ADP-ribosylated proteins in cells, thanks to its ability to degrade poly(ADP-ribose) without cleaving the terminal protein-ribose bond. Required for retinoid acid-dependent gene transactivation, probably by removing poly(ADP-ribose) from histone demethylase KDM4D, allowing chromatin derepression at RAR-dependent gene promoters. Involved in the synthesis of ATP in the nucleus, together with PARP1, NMNAT1 and NUDT5. Nuclear ATP generation is required for extensive chromatin remodeling events that are energy-consuming. The protein is Poly(ADP-ribose) glycohydrolase of Homo sapiens (Human).